A 491-amino-acid polypeptide reads, in one-letter code: Ketol-acid reductoisomerase (NADP(+)) (491 aa).

Residues 15 to 208 (AQLGKCRFMA…GGHRAGVLES (194 aa)) form the KARI N-terminal Rossmann domain. NADP(+) is bound by residues 45-48 (CGAQ), R68, R76, S78, and 108-110 (DKQ). H132 is a catalytic residue. G158 is an NADP(+) binding site. KARI C-terminal knotted domains are found at residues 209–344 (SFVA…NAPQ) and 345–484 (FEGK…MTDM). 4 residues coordinate Mg(2+): D217, E221, E389, and E393. S414 serves as a coordination point for substrate.

Belongs to the ketol-acid reductoisomerase family. Mg(2+) serves as cofactor.

The catalysed reaction is (2R)-2,3-dihydroxy-3-methylbutanoate + NADP(+) = (2S)-2-acetolactate + NADPH + H(+). The enzyme catalyses (2R,3R)-2,3-dihydroxy-3-methylpentanoate + NADP(+) = (S)-2-ethyl-2-hydroxy-3-oxobutanoate + NADPH + H(+). Its pathway is amino-acid biosynthesis; L-isoleucine biosynthesis; L-isoleucine from 2-oxobutanoate: step 2/4. The protein operates within amino-acid biosynthesis; L-valine biosynthesis; L-valine from pyruvate: step 2/4. Its function is as follows. Involved in the biosynthesis of branched-chain amino acids (BCAA). Catalyzes an alkyl-migration followed by a ketol-acid reduction of (S)-2-acetolactate (S2AL) to yield (R)-2,3-dihydroxy-isovalerate. In the isomerase reaction, S2AL is rearranged via a Mg-dependent methyl migration to produce 3-hydroxy-3-methyl-2-ketobutyrate (HMKB). In the reductase reaction, this 2-ketoacid undergoes a metal-dependent reduction by NADPH to yield (R)-2,3-dihydroxy-isovalerate. The sequence is that of Ketol-acid reductoisomerase (NADP(+)) from Serratia proteamaculans (strain 568).